Here is a 710-residue protein sequence, read N- to C-terminus: Nucleolin (710 aa).

The disordered stretch occupies residues 1–303 (MVKLAKAGKN…KKQKVEGTEP (303 aa)). Lys9, Lys15, and Lys16 each carry N6-acetyllysine. Positions 24–43 (VEEDSEDEEMSEDEEDDSSG) are enriched in acidic residues. Phosphoserine is present on residues Ser28, Ser34, Ser41, and Ser42. Over residues 56 to 107 (AAATSAKKVVVSPTKKVAVATPAKKAAVTPGKKAAATPAKKTVTPAKAVTTP) the composition is skewed to low complexity. The stretch at 58-65 (ATSAKKVV) is repeat 1. Residues 58–135 (ATSAKKVVVS…GAAIPAKGAK (78 aa)) are 8 X 8 AA tandem repeats of X-T-P-X-K-K-X-X. Residue Ser67 is modified to Phosphoserine. Thr69, Thr76, Thr84, and Thr92 each carry phosphothreonine. 3 repeat units span residues 75–82 (ATPAKKAA), 83–90 (VTPGKKAA), and 91–98 (ATPAKKTV). The residue at position 96 (Lys96) is an N6-acetyllysine. Thr99 carries the post-translational modification Phosphothreonine. One copy of the 5; truncated repeat lies at 99 to 104 (TPAKAV). Lys102 is subject to N6-acetyllysine. Repeat unit 6 spans residues 105-112 (TTPGKKGA). Residue Thr106 is modified to Phosphothreonine. Lys109 is subject to N6-acetyllysine. Position 113 is a phosphothreonine (Thr113). Lys116 carries the post-translational modification N6-acetyllysine. 2 tandem repeats follow at residues 120 to 127 (ATPGKKGA) and 128 to 135 (AIPAKGAK). At Thr121 the chain carries Phosphothreonine. Low complexity predominate over residues 122–137 (PGKKGAAIPAKGAKNG). An N6-acetyllysine modification is found at Lys124. Residues Ser145 and Ser153 each carry the phosphoserine modification. Over residues 145-171 (SDEEEDDDSEEDEEDDEDEDEDEDEIE) the composition is skewed to acidic residues. Residues 172–183 (PAAMKAAAAAPA) are compositionally biased toward low complexity. Ser184 and Ser206 each carry phosphoserine. Acidic residues predominate over residues 184–211 (SEDEDDEDDEDDEDDDDDEEDDSEEEAM). Thr214 is modified (phosphothreonine). The segment covering 234 to 272 (EDEDEEEDDEDEDDDDDEDDEDDDDEDDEEEEEEEEEEP) has biased composition (acidic residues). Over residues 273–300 (VKEAPGKRKKEMAKQKAAPEAKKQKVEG) the composition is skewed to basic and acidic residues. Lys297 is covalently cross-linked (Glycyl lysine isopeptide (Lys-Gly) (interchain with G-Cter in SUMO1); alternate). Lys297 participates in a covalent cross-link: Glycyl lysine isopeptide (Lys-Gly) (interchain with G-Cter in SUMO2); alternate. A Phosphothreonine modification is found at Thr301. 2 RRM domains span residues 307–383 (FNLF…KPKG) and 393–466 (RTLL…YTGE). Lys318 carries the N6-acetyllysine modification. A Glycyl lysine isopeptide (Lys-Gly) (interchain with G-Cter in SUMO1); alternate cross-link involves residue Lys324. A Glycyl lysine isopeptide (Lys-Gly) (interchain with G-Cter in SUMO2); alternate cross-link involves residue Lys324. Residue Lys348 is modified to N6-acetyllysine. Ser356 carries the phosphoserine modification. Position 367 is a phosphothreonine (Thr367). Lys370 is covalently cross-linked (Glycyl lysine isopeptide (Lys-Gly) (interchain with G-Cter in SUMO2)). Residue Lys377 forms a Glycyl lysine isopeptide (Lys-Gly) (interchain with G-Cter in SUMO2); alternate linkage. Lys377 is modified (N6-acetyllysine; alternate). N6-acetyllysine is present on residues Lys398 and Lys403. Thr405 carries the post-translational modification Phosphothreonine. Lys427 and Lys444 each carry N6-acetyllysine. Ser458 and Ser460 each carry phosphoserine. An N6-acetyllysine mark is found at Lys467 and Lys477. Residues 486–560 (KTLVLSNLSY…RAIRLELQGP (75 aa)) form the RRM 3 domain. Residue Lys513 forms a Glycyl lysine isopeptide (Lys-Gly) (interchain with G-Cter in SUMO2); alternate linkage. At Lys513 the chain carries N6-acetyllysine; alternate. Lys521 is modified (N6-acetyllysine). Ser563 is subject to Phosphoserine. An N6-acetyllysine modification is found at Lys572. Positions 572-647 (KTLFVKGLSE…NKVTLDWAKP (76 aa)) constitute an RRM 4 domain. Lys577 is covalently cross-linked (Glycyl lysine isopeptide (Lys-Gly) (interchain with G-Cter in SUMO2); alternate). Lys577 bears the N6-acetyllysine; alternate mark. A Phosphoserine modification is found at Ser580. A Glycyl lysine isopeptide (Lys-Gly) (interchain with G-Cter in SUMO1); alternate cross-link involves residue Lys589. Residue Lys589 forms a Glycyl lysine isopeptide (Lys-Gly) (interchain with G-Cter in SUMO2); alternate linkage. Residues Ser591 and Ser619 each carry the phosphoserine modification. Lys624 participates in a covalent cross-link: Glycyl lysine isopeptide (Lys-Gly) (interchain with G-Cter in SUMO2). Residues 640–710 (VTLDWAKPKG…KPQGKKTKFE (71 aa)) form a disordered region. Lys646 bears the N6-acetyllysine mark. Gly residues predominate over residues 650–696 (EGGFGGRGGGRGGFGGRGGGRGGRGGFGGRGRGGFGGRGGFRGGRGG). Arg656, Arg660, Arg666, Arg670, Arg673, Arg679, Arg681, Arg687, and Arg691 each carry asymmetric dimethylarginine. Residue Arg694 is modified to Asymmetric dimethylarginine; alternate. An Omega-N-methylarginine; alternate modification is found at Arg694. Over residues 697-710 (GGDHKPQGKKTKFE) the composition is skewed to basic and acidic residues.

Identified in a IGF2BP1-dependent mRNP granule complex containing untranslated mRNAs. Component of the SWAP complex that consists of NPM1, NCL/nucleolin, PARP1 and SWAP70. Component of a complex which is at least composed of HTATSF1/Tat-SF1, the P-TEFb complex components CDK9 and CCNT1, RNA polymerase II, SUPT5H, and NCL/nucleolin. Interacts with AICDA. Interacts with APTX. Interacts with C1QBP. Interacts with ERBB4. Interacts (via C-terminus) with FMR1 isoform 6 (via N-terminus). Interacts with GZF1; this interaction is important for nucleolar localization of GZF1. Interacts with NSUN2. Interacts with NVL. Interacts (via N-terminus domain) with SETX. Interacts (via RRM1 and C-terminal RRM4/Arg/Gly-rich domains) with TERT; the interaction is important for nucleolar localization of TERT. Interacts with WDR46. Interacts with ZFP36. Interacts with LRRC34. Interacts with RRP1B. Interacts with HNRNPU; this interaction occurs during mitosis. Interacts with RIOK1; RIOK1 recruits NCL to PRMT5 for symmetrically methylation. Interacts with ZBTB7B. Interacts with MDK; this interaction promotes NCL clustering and lateral movements of this complex into lipid rafts leading to MDK internalization. Interacts with HDGF (isoform 1). Interacts with ALKBH2. Interacts with IGFBP5; this interaction is necessary for IGFBP5 localization to the nucleus. Interacts with DDX24 (when ubiquitinated); this interaction may be important during ribosome biogenesis. Post-translationally, some glutamate residues are glycylated by TTLL8. This modification occurs exclusively on glutamate residues and results in a glycine chain on the gamma-carboxyl group. In terms of processing, symmetrically methylated by PRMT5.

It is found in the nucleus. It localises to the nucleolus. The protein resides in the cytoplasm. In terms of biological role, nucleolin is the major nucleolar protein of growing eukaryotic cells. It is found associated with intranucleolar chromatin and pre-ribosomal particles. It induces chromatin decondensation by binding to histone H1. It is thought to play a role in pre-rRNA transcription and ribosome assembly. May play a role in the process of transcriptional elongation. Binds RNA oligonucleotides with 5'-UUAGGG-3' repeats more tightly than the telomeric single-stranded DNA 5'-TTAGGG-3' repeats. The sequence is that of Nucleolin (NCL) from Homo sapiens (Human).